The following is a 199-amino-acid chain: V-type ATP synthase subunit E (199 aa).

It belongs to the V-ATPase E subunit family.

Functionally, produces ATP from ADP in the presence of a proton gradient across the membrane. In Clostridium botulinum (strain Hall / ATCC 3502 / NCTC 13319 / Type A), this protein is V-type ATP synthase subunit E.